Here is a 344-residue protein sequence, read N- to C-terminus: S-methyl-5'-thioadenosine phosphorylase (344 aa).

Residues Thr45, 88 to 89 (RH), and 121 to 122 (SA) contribute to the phosphate site. Position 238 (Met238) interacts with substrate. Position 239 (Ser239) interacts with phosphate. Residue 262 to 264 (DYD) coordinates substrate.

Belongs to the PNP/MTAP phosphorylase family. MTAP subfamily. In terms of assembly, homotrimer.

The protein resides in the cytoplasm. It localises to the nucleus. It carries out the reaction S-methyl-5'-thioadenosine + phosphate = 5-(methylsulfanyl)-alpha-D-ribose 1-phosphate + adenine. Its pathway is amino-acid biosynthesis; L-methionine biosynthesis via salvage pathway; S-methyl-5-thio-alpha-D-ribose 1-phosphate from S-methyl-5'-thioadenosine (phosphorylase route): step 1/1. In terms of biological role, catalyzes the reversible phosphorylation of S-methyl-5'-thioadenosine (MTA) to adenine and 5-methylthioribose-1-phosphate. Involved in the breakdown of MTA, a major by-product of polyamine biosynthesis. Responsible for the first step in the methionine salvage pathway after MTA has been generated from S-adenosylmethionine. Has broad substrate specificity with 6-aminopurine nucleosides as preferred substrates. This is S-methyl-5'-thioadenosine phosphorylase from Candida albicans (strain SC5314 / ATCC MYA-2876) (Yeast).